The chain runs to 213 residues: UPF0329 protein ECU04_0110 (213 aa).

This sequence belongs to the UPF0329 family.

The polypeptide is UPF0329 protein ECU04_0110 (Encephalitozoon cuniculi (strain GB-M1) (Microsporidian parasite)).